Reading from the N-terminus, the 428-residue chain is Probable glucose-6-phosphate isomerase (428 aa).

Glu269 functions as the Proton donor in the catalytic mechanism. Catalysis depends on residues His290 and Lys401.

The protein belongs to the GPI family.

The protein localises to the cytoplasm. It carries out the reaction alpha-D-glucose 6-phosphate = beta-D-fructose 6-phosphate. Its pathway is carbohydrate biosynthesis; gluconeogenesis. It functions in the pathway carbohydrate degradation; glycolysis; D-glyceraldehyde 3-phosphate and glycerone phosphate from D-glucose: step 2/4. Its function is as follows. Catalyzes the reversible isomerization of glucose-6-phosphate to fructose-6-phosphate. This is Probable glucose-6-phosphate isomerase from Natronomonas pharaonis (strain ATCC 35678 / DSM 2160 / CIP 103997 / JCM 8858 / NBRC 14720 / NCIMB 2260 / Gabara) (Halobacterium pharaonis).